We begin with the raw amino-acid sequence, 310 residues long: Inorganic pyrophosphatase, mitochondrial (310 aa).

The N-terminal 30 residues, 1–30 (MNLLRMNALTSKARSIERLKQTLNILSIRN), are a transit peptide targeting the mitochondrion. Mg(2+) contacts are provided by aspartate 152, aspartate 157, and aspartate 189.

This sequence belongs to the PPase family. As to quaternary structure, homodimer that binds non-covalently to a protein complex in the inner mitochondrial membrane. It depends on Mg(2+) as a cofactor.

The protein resides in the mitochondrion. The catalysed reaction is diphosphate + H2O = 2 phosphate + H(+). Involved in energy production. Its activity is stimulated by uncouplers of ATP synthesis. This is Inorganic pyrophosphatase, mitochondrial (PPA2) from Saccharomyces cerevisiae (strain ATCC 204508 / S288c) (Baker's yeast).